The sequence spans 371 residues: MTEADPVPLARDLLRSRSVTPEDDGAQTVLARALDALGFSIEWLRFGEVSNLVARRGSGSPHFGFAGHTDVVPPGEGWRHDPFAAVIEDGLLFGRGAVDMKGAIAAFVAALAARPANHAGTISLLITGDEEGDAVDGTRRILDHLAASGALPEFCLVGEPTCRARLGDTIKIGRRGSISAHVTVRGVQGHVAYPHLADNPLHRLIPALEALRATTLDEGTAWFEPSSLQITSVDTGNKAGNVIPASASARLNIRFNDRHTGPDLAAWIRDTVARHAPGAACDIGISGEAFLTEPGPVTTLFSEAVAAVTGITPKLDTGGGTSDARFIAAHCPVAEFGLVGTSMHRVDEAVPVSELRALAEIYGRILDRVFR.

His68 contacts Zn(2+). The active site involves Asp70. Asp99 contributes to the Zn(2+) binding site. The active-site Proton acceptor is the Glu130. Positions 131, 159, and 344 each coordinate Zn(2+).

It belongs to the peptidase M20A family. DapE subfamily. As to quaternary structure, homodimer. Zn(2+) is required as a cofactor. The cofactor is Co(2+).

The catalysed reaction is N-succinyl-(2S,6S)-2,6-diaminopimelate + H2O = (2S,6S)-2,6-diaminopimelate + succinate. It participates in amino-acid biosynthesis; L-lysine biosynthesis via DAP pathway; LL-2,6-diaminopimelate from (S)-tetrahydrodipicolinate (succinylase route): step 3/3. Functionally, catalyzes the hydrolysis of N-succinyl-L,L-diaminopimelic acid (SDAP), forming succinate and LL-2,6-diaminopimelate (DAP), an intermediate involved in the bacterial biosynthesis of lysine and meso-diaminopimelic acid, an essential component of bacterial cell walls. The chain is Succinyl-diaminopimelate desuccinylase from Acidiphilium cryptum (strain JF-5).